The following is a 453-amino-acid chain: Collagen alpha-4(IV) chain (453 aa).

The disordered stretch occupies residues 1-218 (GPPGPPGAPG…PPGPMGDPGP (218 aa)). Residues 1 to 222 (GPPGPPGAPG…MGDPGPIGFG (222 aa)) form a triple-helical region region. 3 stretches are compositionally biased toward pro residues: residues 26 to 44 (QGPP…PGPP), 60 to 72 (PGPP…PGPP), and 95 to 122 (PQGP…PLGP). A compositionally biased stretch (low complexity) spans 153-162 (PEGTMGLPGM). Residues 174–183 (PGLDGRRGED) are compositionally biased toward basic and acidic residues. The span at 206 to 215 (APGPPGPMGD) shows a compositional bias: pro residues. Residues 228 to 453 (GFLLVLHSQT…SRCQVCVKHS (226 aa)) form the Collagen IV NC1 domain. 6 disulfides stabilise this stretch: Cys243–Cys332, Cys276–Cys329, Cys288–Cys294, Cys351–Cys449, Cys385–Cys446, and Cys397–Cys404.

It belongs to the type IV collagen family. In terms of assembly, there are six type IV collagen isoforms, alpha 1(IV)-alpha 6(IV), each of which can form a triple helix structure with 2 other chains to generate type IV collagen network. The alpha 3(IV) chain forms a triple helical protomer with alpha 4(IV) and alpha 5(IV); this triple helical structure dimerizes through NC1-NC1 domain interactions such that the alpha 3(IV), alpha 4(IV) and alpha 5(IV) chains of one protomer connect with the alpha 5(IV), alpha 4(IV) and alpha 3(IV) chains of the opposite protomer, respectively. Associates with LAMB2 at the neuromuscular junction and in GBM. In terms of processing, prolines at the third position of the tripeptide repeating unit (G-X-Y) are hydroxylated in some or all of the chains. Post-translationally, type IV collagens contain numerous cysteine residues which are involved in inter- and intramolecular disulfide bonding. 12 of these, located in the NC1 domain, are conserved in all known type IV collagens. The trimeric structure of the NC1 domains is stabilized by covalent bonds between Lys and Met residues. In terms of tissue distribution, alpha 3 and alpha 4 type IV collagens are colocalized and present only in basement membranes of kidney, eye, cochlea, lung and brain.

It localises to the secreted. Its subcellular location is the extracellular space. It is found in the extracellular matrix. The protein localises to the basement membrane. Functionally, type IV collagen is the major structural component of glomerular basement membranes (GBM), forming a 'chicken-wire' meshwork together with laminins, proteoglycans and entactin/nidogen. This Bos taurus (Bovine) protein is Collagen alpha-4(IV) chain (COL4A4).